A 261-amino-acid polypeptide reads, in one-letter code: MYTDLKDKVVVITGGSTGLGRAMAVRFGQEEAKVVINYYNNEEEALDAKKEVEEAGGQAIIVQGDVTKEEDVVNLVQTAIKEFGTLDVMINNAGVENPVPSHELSLDNWNKVIDTNLTGAFLGSREAIKYFVENDIKGNVINMSSVHEMIPWPLFVHYAASKGGMKLMTETLALEYAPKGIRVNNIGPGAMNTPINAEKFADPEQRADVESMIPMGYIGKPEEVAAVAAFLASSQASYVTGITLFADGGMTKYPSFQAGRG.

Residue 11-35 (VITGGSTGLGRAMAVRFGQEEAKVV) coordinates NADP(+). Ser145 is a substrate binding site. Tyr158 (proton acceptor) is an active-site residue.

Belongs to the short-chain dehydrogenases/reductases (SDR) family. Homotetramer.

It catalyses the reaction D-glucose + NAD(+) = D-glucono-1,5-lactone + NADH + H(+). It carries out the reaction D-glucose + NADP(+) = D-glucono-1,5-lactone + NADPH + H(+). This is Glucose 1-dehydrogenase A (gdhA) from Priestia megaterium (Bacillus megaterium).